We begin with the raw amino-acid sequence, 604 residues long: Kinesin-like protein KIN-14O (604 aa).

A coiled-coil region spans residues 22–61 (MLNHDKDISALQEEISALRSRQRHLDHRRQEALDKLIDLK). One can recognise a Kinesin motor domain in the interval 63 to 387 (SIRVFCRVRP…LSFAKRARSI (325 aa)). 141-148 (GQTGTGKT) contributes to the ATP binding site. Positions 383–443 (RARSIESSKE…EERKKLSSSA (61 aa)) form a coiled coil. 2 disordered regions span residues 465–511 (DSAE…KTRL) and 565–604 (SNNS…SSLT). A compositionally biased stretch (polar residues) spans 565–574 (SNNSIDSTAA). Residues 593 to 604 (LHQHRRRMSSLT) show a composition bias toward basic residues.

The protein belongs to the TRAFAC class myosin-kinesin ATPase superfamily. Kinesin family. KIN-14 subfamily.

The protein is Kinesin-like protein KIN-14O of Oryza sativa subsp. japonica (Rice).